Reading from the N-terminus, the 410-residue chain is Diguanylate cyclase DgcM (410 aa).

2 PAS domains span residues 3 to 70 and 129 to 198; these read THNF…NQHD and GFYA…HLPG. The region spanning 199–251 is the PAC domain; the sequence is GHKPLNFVHKLADGSTRHVQTYAGPIEIYGDKLMLCIVHDITEQKRLEEQLEH. The GGDEF domain maps to 283 to 410; sequence QDYSLLLIDT…NDGRNRVLAA (128 aa). Asp-291 serves as a coordination point for Mg(2+). Positions 299, 304, and 308 each coordinate substrate. Mg(2+) is bound at residue Glu-334. Glu-334 serves as the catalytic Proton acceptor.

In terms of assembly, forms homodimers and homotetramers. Interacts with PdeR and MlrA. The cofactor is Mg(2+).

It catalyses the reaction 2 GTP = 3',3'-c-di-GMP + 2 diphosphate. The protein operates within purine metabolism; 3',5'-cyclic di-GMP biosynthesis. Activity is inhibited by the phosphodiesterase PdeR. Inhibition is relieved by high cellular c-di-GMP levels. Part of a signaling cascade that regulates curli biosynthesis. The cascade is composed of two cyclic-di-GMP (c-di-GMP) control modules, in which c-di-GMP controlled by the DgcE/PdeH pair (module I) regulates the activity of the DgcM/PdeR pair (module II), which in turn regulates activity of the transcription factor MlrA and expression of the master biofilm regulator csgD. DgcM stimulates activity of MlrA by direct interaction, leading to the transcription of csgD. It also catalyzes the synthesis of c-di-GMP via the condensation of 2 GTP molecules, which contributes to the c-di-GMP pool generated by module I in a positive feedback loop. Production of c-di-GMP contributes to but is not essential for MlrA activation. In Escherichia coli (strain K12), this protein is Diguanylate cyclase DgcM.